The primary structure comprises 101 residues: Protein Tat (101 aa).

Positions 1–24 are interaction with human CREBBP; the sequence is MEPVDPNLEPWKHPGSQPRTACNN. The tract at residues 1–48 is transactivation; that stretch reads MEPVDPNLEPWKHPGSQPRTACNNCYCKKCCFHCQVCFTKKGLGISYG. The Zn(2+) site is built by Cys22, Cys25, and Cys27. The segment at 22–37 is cysteine-rich; it reads CNNCYCKKCCFHCQVC. N6-acetyllysine; by host PCAF is present on Lys28. The Zn(2+) site is built by Cys30, His33, Cys34, and Cys37. The tract at residues 38–48 is core; sequence FTKKGLGISYG. Residues 47–101 are disordered; sequence YGRKKRRQRRRPPQDSQTHQSSLSKQPTSQLRGDPTGPTESKKKVERETETDPVH. Residues 48 to 57 are compositionally biased toward basic residues; the sequence is GRKKRRQRRR. Positions 49 to 57 match the Nuclear localization signal, RNA-binding (TAR), and protein transduction motif; the sequence is RKKRRQRRR. Residues 49–86 form an interaction with the host capping enzyme RNGTT region; the sequence is RKKRRQRRRPPQDSQTHQSSLSKQPTSQLRGDPTGPTE. N6-acetyllysine; by host EP300 and GCN5L2 occurs at positions 50 and 51. Arg52 and Arg53 each carry asymmetric dimethylarginine; by host PRMT6. Residues 61–77 show a composition bias toward polar residues; the sequence is DSQTHQSSLSKQPTSQL. Lys71 is covalently cross-linked (Glycyl lysine isopeptide (Lys-Gly) (interchain with G-Cter in ubiquitin)). The Cell attachment site signature appears at 78-80; that stretch reads RGD. Basic and acidic residues predominate over residues 86–101; that stretch reads ESKKKVERETETDPVH.

This sequence belongs to the lentiviruses Tat family. As to quaternary structure, interacts with host CCNT1. Associates with the P-TEFb complex composed at least of Tat, P-TEFb (CDK9 and CCNT1), TAR RNA, RNA Pol II. Recruits the HATs CREBBP, TAF1/TFIID, EP300, PCAF and GCN5L2. Interacts with host KAT5/Tip60; this interaction targets the latter to degradation. Interacts with the host deacetylase SIRT1. Interacts with host capping enzyme RNGTT; this interaction stimulates RNGTT. Binds to host KDR, and to the host integrins ITGAV/ITGB3 and ITGA5/ITGB1. Interacts with host KPNB1/importin beta-1 without previous binding to KPNA1/importin alpha-1. Interacts with EIF2AK2. Interacts with host nucleosome assembly protein NAP1L1; this interaction may be required for the transport of Tat within the nucleus, since the two proteins interact at the nuclear rim. Interacts with host C1QBP/SF2P32; this interaction involves lysine-acetylated Tat. Interacts with the host chemokine receptors CCR2, CCR3 and CXCR4. Interacts with host DPP4/CD26; this interaction may trigger an anti-proliferative effect. Interacts with host LDLR. Interacts with the host extracellular matrix metalloproteinase MMP1. Interacts with host PRMT6; this interaction mediates Tat's methylation. Interacts with, and is ubiquitinated by MDM2/Hdm2. Interacts with host PSMC3 and HTATIP2. Interacts with STAB1; this interaction may overcome SATB1-mediated repression of IL2 and IL2RA (interleukin) in T cells by binding to the same domain than HDAC1. Interacts (when acetylated) with human CDK13, thereby increasing HIV-1 mRNA splicing and promoting the production of the doubly spliced HIV-1 protein Nef. Interacts with host TBP; this interaction modulates the activity of transcriptional pre-initiation complex. Interacts with host RELA. Interacts with host PLSCR1; this interaction negatively regulates Tat transactivation activity by altering its subcellular distribution. Asymmetrical arginine methylation by host PRMT6 seems to diminish the transactivation capacity of Tat and affects the interaction with host CCNT1. Post-translationally, acetylation by EP300, CREBBP, GCN5L2/GCN5 and PCAF regulates the transactivation activity of Tat. EP300-mediated acetylation of Lys-50 promotes dissociation of Tat from the TAR RNA through the competitive binding to PCAF's bromodomain. In addition, the non-acetylated Tat's N-terminus can also interact with PCAF. PCAF-mediated acetylation of Lys-28 enhances Tat's binding to CCNT1. Lys-50 is deacetylated by SIRT1. In terms of processing, polyubiquitination by host MDM2 does not target Tat to degradation, but activates its transactivation function and fosters interaction with CCNT1 and TAR RNA. Phosphorylated by EIF2AK2 on serine and threonine residues adjacent to the basic region important for TAR RNA binding and function. Phosphorylation of Tat by EIF2AK2 is dependent on the prior activation of EIF2AK2 by dsRNA.

The protein resides in the host nucleus. The protein localises to the host nucleolus. Its subcellular location is the host cytoplasm. It localises to the secreted. Functionally, transcriptional activator that increases RNA Pol II processivity, thereby increasing the level of full-length viral transcripts. Recognizes a hairpin structure at the 5'-LTR of the nascent viral mRNAs referred to as the transactivation responsive RNA element (TAR) and recruits the cyclin T1-CDK9 complex (P-TEFb complex) that will in turn hyperphosphorylate the RNA polymerase II to allow efficient elongation. The CDK9 component of P-TEFb and other Tat-activated kinases hyperphosphorylate the C-terminus of RNA Pol II that becomes stabilized and much more processive. Other factors such as HTATSF1/Tat-SF1, SUPT5H/SPT5, and HTATIP2 are also important for Tat's function. Besides its effect on RNA Pol II processivity, Tat induces chromatin remodeling of proviral genes by recruiting the histone acetyltransferases (HATs) CREBBP, EP300 and PCAF to the chromatin. This also contributes to the increase in proviral transcription rate, especially when the provirus integrates in transcriptionally silent region of the host genome. To ensure maximal activation of the LTR, Tat mediates nuclear translocation of NF-kappa-B by interacting with host RELA. Through its interaction with host TBP, Tat may also modulate transcription initiation. Tat can reactivate a latently infected cell by penetrating in it and transactivating its LTR promoter. In the cytoplasm, Tat is thought to act as a translational activator of HIV-1 mRNAs. Extracellular circulating Tat can be endocytosed by surrounding uninfected cells via the binding to several surface receptors such as CD26, CXCR4, heparan sulfate proteoglycans (HSPG) or LDLR. Neurons are rarely infected, but they internalize Tat via their LDLR. Through its interaction with nuclear HATs, Tat is potentially able to control the acetylation-dependent cellular gene expression. Modulates the expression of many cellular genes involved in cell survival, proliferation or in coding for cytokines or cytokine receptors. Tat plays a role in T-cell and neurons apoptosis. Tat induced neurotoxicity and apoptosis probably contribute to neuroAIDS. Circulating Tat also acts as a chemokine-like and/or growth factor-like molecule that binds to specific receptors on the surface of the cells, affecting many cellular pathways. In the vascular system, Tat binds to ITGAV/ITGB3 and ITGA5/ITGB1 integrins dimers at the surface of endothelial cells and competes with bFGF for heparin-binding sites, leading to an excess of soluble bFGF. This Human immunodeficiency virus type 1 group M subtype B (isolate YU-2) (HIV-1) protein is Protein Tat.